The chain runs to 74 residues: Consomatin Ma1 (74 aa).

The N-terminal stretch at 1 to 22 (MQTAYWVMVMMMVWITAPLSEG) is a signal peptide. Positions 23–57 (GKLNGEIRGLVSHILIPQHTLRSLTSRDRSDNGGS) are excised as a propeptide. The cysteines at positions 63 and 68 are disulfide-linked. Trp65 carries the D-tryptophan modification. 4-hydroxyproline is present on residues Pro69, Pro70, and Pro72.

Belongs to the conotoxin C superfamily. Consomatin family. In terms of tissue distribution, expressed by the venom duct.

The protein localises to the secreted. Moderately activates human somatostatin receptors (SSTR) with a preferential activation of SSTR1 and SSTR4. In vivo, does not cause behavioral changes in mice within a few minutes of intracranial injection, but causes a progressive loss of movement thereafter. Four to five hours after injection, mice recover, even with the highest dose tested. Shows antinociception and antihyperalgesia activities in two mouse models of acute pain, most probably by acting outside the central nervous system. This Conus magus (Magical cone) protein is Consomatin Ma1.